Consider the following 132-residue polypeptide: Histone H2A (132 aa).

Residues 1–13 (MSAKGKTGRKKAS) show a composition bias toward basic residues. Positions 1–21 (MSAKGKTGRKKASKGTSNSAK) are disordered.

It belongs to the histone H2A family. As to quaternary structure, the nucleosome is a histone octamer containing two molecules each of H2A, H2B, H3 and H4 assembled in one H3-H4 heterotetramer and two H2A-H2B heterodimers. The octamer wraps approximately 147 bp of DNA.

The protein localises to the nucleus. Its subcellular location is the chromosome. Functionally, core component of nucleosome. Nucleosomes wrap and compact DNA into chromatin, limiting DNA accessibility to the cellular machineries which require DNA as a template. Histones thereby play a central role in transcription regulation, DNA repair, DNA replication and chromosomal stability. DNA accessibility is regulated via a complex set of post-translational modifications of histones, also called histone code, and nucleosome remodeling. In Plasmodium falciparum, this protein is Histone H2A.